The primary structure comprises 328 residues: Mitochondrial thiamine pyrophosphate carrier 1 (328 aa).

Solcar repeat units follow at residues 12-110, 120-208, and 221-316; these read GTRR…TTQL, PQPI…LRPV, and PPGS…ALKL. The next 6 membrane-spanning stretches (helical) occupy residues 17–37, 79–99, 126–146, 185–205, 227–247, and 291–308; these read VVLA…PLDV, LTGL…YGGI, FISG…LDLL, SAAV…YEAL, AAAG…LDLV, and GLTV…VTMW.

The protein belongs to the mitochondrial carrier (TC 2.A.29) family.

Its subcellular location is the mitochondrion inner membrane. Its function is as follows. Mitochondrial transporter that mediates uptake of thiamine pyrophosphate (ThPP) into mitochondria. The chain is Mitochondrial thiamine pyrophosphate carrier 1 (tpc1) from Emericella nidulans (strain FGSC A4 / ATCC 38163 / CBS 112.46 / NRRL 194 / M139) (Aspergillus nidulans).